Reading from the N-terminus, the 410-residue chain is Acetate kinase (410 aa).

Mg(2+) is bound at residue Asn-7. Lys-14 contributes to the ATP binding site. Arg-88 is a binding site for substrate. Asp-145 functions as the Proton donor/acceptor in the catalytic mechanism. ATP contacts are provided by residues 203 to 207 (HAGNG), 278 to 280 (DTR), and 326 to 330 (GIGEN). Residue Glu-379 participates in Mg(2+) binding.

It belongs to the acetokinase family. Homodimer. Requires Mg(2+) as cofactor. The cofactor is Mn(2+).

It localises to the cytoplasm. It carries out the reaction acetate + ATP = acetyl phosphate + ADP. It participates in metabolic intermediate biosynthesis; acetyl-CoA biosynthesis; acetyl-CoA from acetate: step 1/2. Functionally, catalyzes the formation of acetyl phosphate from acetate and ATP. Can also catalyze the reverse reaction. This Aster yellows witches'-broom phytoplasma (strain AYWB) protein is Acetate kinase.